The chain runs to 277 residues: Large ribosomal subunit protein uL2 (277 aa).

Disordered stretches follow at residues 1 to 20 (MAVK…TTAD) and 210 to 277 (GRSR…RGGK). Positions 210-221 (GRSRWLGRKPHQ) are enriched in basic residues.

This sequence belongs to the universal ribosomal protein uL2 family. In terms of assembly, part of the 50S ribosomal subunit. Forms a bridge to the 30S subunit in the 70S ribosome.

Functionally, one of the primary rRNA binding proteins. Required for association of the 30S and 50S subunits to form the 70S ribosome, for tRNA binding and peptide bond formation. It has been suggested to have peptidyltransferase activity; this is somewhat controversial. Makes several contacts with the 16S rRNA in the 70S ribosome. The sequence is that of Large ribosomal subunit protein uL2 from Deinococcus deserti (strain DSM 17065 / CIP 109153 / LMG 22923 / VCD115).